The chain runs to 359 residues: sn-1 acyl-lipid omega-3 desaturase (ferredoxin) (359 aa).

2 helical membrane-spanning segments follow: residues 44-64 (LGYF…AAYL) and 67-87 (WFFY…LFVV). The Histidine box-1 signature appears at 89-93 (HDCGH). The Histidine box-2 signature appears at 125-129 (HRTHH). Transmembrane regions (helical) follow at residues 153–173 (AWYE…IYLF), 206–226 (LAAF…LFLL), and 228–248 (FYVA…FLHH). A Histidine box-3 motif is present at residues 291–295 (HHIFS).

Belongs to the fatty acid desaturase type 2 family. It depends on Fe(2+) as a cofactor.

It localises to the membrane. The catalysed reaction is a 1-[(9Z,12Z)-octadecdienoyl]-2-acyl-glycerolipid + 2 reduced [2Fe-2S]-[ferredoxin] + O2 + 2 H(+) = a 1-[(9Z,12Z,15Z)-octadectrienoyl]-2-acyl-glycerolipid + 2 oxidized [2Fe-2S]-[ferredoxin] + 2 H2O. It carries out the reaction a 1-[(6Z,9Z,12Z)-octadectrienoyl]-2-acyl-glycerolipid + 2 reduced [2Fe-2S]-[ferredoxin] + O2 + 2 H(+) = a 1-[(6Z,9Z,12Z,15Z)-octadectetraenoyl]-2-acyl-glycerolipid + 2 oxidized [2Fe-2S]-[ferredoxin] + 2 H2O. It participates in lipid metabolism; polyunsaturated fatty acid biosynthesis. In terms of biological role, desaturase involved in fatty acid biosynthesis. Introduces a double bond at carbon 15 of linoleoyl and gamma-linolenoyl groups attached to the sn-1 position of the glycerol moiety of membrane glycerolipids. The chain is sn-1 acyl-lipid omega-3 desaturase (ferredoxin) from Synechocystis sp. (strain ATCC 27184 / PCC 6803 / Kazusa).